Here is a 266-residue protein sequence, read N- to C-terminus: Trypsin Blo t 3 (266 aa).

An N-terminal signal peptide occupies residues 1-15 (MKVLVLFCLVSLAAA). Positions 16 to 35 (GPLKDALNKAQVDAFYAEGY) are excised as a propeptide. The Peptidase S1 domain maps to 36–260 (IVDGSNAADG…RVGNYISWIK (225 aa)). Cysteine 60 and cysteine 76 are joined by a disulfide. Catalysis depends on charge relay system residues histidine 75 and aspartate 120. 2 disulfide bridges follow: cysteine 187–cysteine 204 and cysteine 216–cysteine 240. The Charge relay system role is filled by serine 220.

The protein belongs to the peptidase S1 family.

The protein resides in the secreted. It carries out the reaction Preferential cleavage: Arg-|-Xaa, Lys-|-Xaa.. In Blomia tropicalis (Mite), this protein is Trypsin Blo t 3.